Reading from the N-terminus, the 330-residue chain is Aspartate--ammonia ligase (330 aa).

The protein belongs to the class-II aminoacyl-tRNA synthetase family. AsnA subfamily.

It is found in the cytoplasm. The enzyme catalyses L-aspartate + NH4(+) + ATP = L-asparagine + AMP + diphosphate + H(+). It participates in amino-acid biosynthesis; L-asparagine biosynthesis; L-asparagine from L-aspartate (ammonia route): step 1/1. The sequence is that of Aspartate--ammonia ligase from Escherichia coli O81 (strain ED1a).